We begin with the raw amino-acid sequence, 227 residues long: Ribosomal RNA large subunit methyltransferase E (227 aa).

S-adenosyl-L-methionine contacts are provided by Gly78, Trp80, Asp103, Asp119, and Asp143. Catalysis depends on Lys183, which acts as the Proton acceptor.

Belongs to the class I-like SAM-binding methyltransferase superfamily. RNA methyltransferase RlmE family.

It localises to the cytoplasm. It carries out the reaction uridine(2552) in 23S rRNA + S-adenosyl-L-methionine = 2'-O-methyluridine(2552) in 23S rRNA + S-adenosyl-L-homocysteine + H(+). Specifically methylates the uridine in position 2552 of 23S rRNA at the 2'-O position of the ribose in the fully assembled 50S ribosomal subunit. The protein is Ribosomal RNA large subunit methyltransferase E of Rickettsia peacockii (strain Rustic).